Here is a 298-residue protein sequence, read N- to C-terminus: uncharacterized protein (298 aa).

This is an uncharacterized protein from Orgyia pseudotsugata multicapsid polyhedrosis virus (OpMNPV).